The chain runs to 550 residues: CTP synthase (550 aa).

Positions 1-270 (MTKYVFVTGG…DNIVCEALGL (270 aa)) are amidoligase domain. Serine 13 serves as a coordination point for CTP. Residue serine 13 participates in UTP binding. Residues 14-19 (SLGKGI) and aspartate 71 each bind ATP. Residues aspartate 71 and glutamate 144 each contribute to the Mg(2+) site. CTP is bound by residues 151–153 (DIE), 191–196 (KTKPTQ), and lysine 227. Residues 191–196 (KTKPTQ) and lysine 227 contribute to the UTP site. The Glutamine amidotransferase type-1 domain maps to 295–545 (TIGMVGKYVD…IRAALEHKAQ (251 aa)). Glycine 356 contacts L-glutamine. Cysteine 383 acts as the Nucleophile; for glutamine hydrolysis in catalysis. L-glutamine contacts are provided by residues 384–387 (LGMQ) and glutamate 407. The disordered stretch occupies residues 430–459 (VERRDNSSDLGGTMRKGAQRCPIRPGTRAQ). Residue arginine 473 participates in L-glutamine binding. Active-site residues include histidine 518 and glutamate 520.

Belongs to the CTP synthase family. In terms of assembly, homotetramer.

The catalysed reaction is UTP + L-glutamine + ATP + H2O = CTP + L-glutamate + ADP + phosphate + 2 H(+). It catalyses the reaction L-glutamine + H2O = L-glutamate + NH4(+). The enzyme catalyses UTP + NH4(+) + ATP = CTP + ADP + phosphate + 2 H(+). The protein operates within pyrimidine metabolism; CTP biosynthesis via de novo pathway; CTP from UDP: step 2/2. Allosterically activated by GTP, when glutamine is the substrate; GTP has no effect on the reaction when ammonia is the substrate. The allosteric effector GTP functions by stabilizing the protein conformation that binds the tetrahedral intermediate(s) formed during glutamine hydrolysis. Inhibited by the product CTP, via allosteric rather than competitive inhibition. In terms of biological role, catalyzes the ATP-dependent amination of UTP to CTP with either L-glutamine or ammonia as the source of nitrogen. Regulates intracellular CTP levels through interactions with the four ribonucleotide triphosphates. In Bordetella parapertussis (strain 12822 / ATCC BAA-587 / NCTC 13253), this protein is CTP synthase.